Reading from the N-terminus, the 342-residue chain is L-threonine 3-dehydrogenase (342 aa).

A Zn(2+)-binding site is contributed by C38. Residues T40 and H43 each act as charge relay system in the active site. Residues H63, E64, C93, C96, C99, and C107 each contribute to the Zn(2+) site. NAD(+) is bound by residues I175, D195, R200, 262–264 (LGI), and 286–287 (IY).

Belongs to the zinc-containing alcohol dehydrogenase family. In terms of assembly, homotetramer. It depends on Zn(2+) as a cofactor.

The protein localises to the cytoplasm. The catalysed reaction is L-threonine + NAD(+) = (2S)-2-amino-3-oxobutanoate + NADH + H(+). It participates in amino-acid degradation; L-threonine degradation via oxydo-reductase pathway; glycine from L-threonine: step 1/2. Its function is as follows. Catalyzes the NAD(+)-dependent oxidation of L-threonine to 2-amino-3-ketobutyrate. The protein is L-threonine 3-dehydrogenase of Aeromonas hydrophila subsp. hydrophila (strain ATCC 7966 / DSM 30187 / BCRC 13018 / CCUG 14551 / JCM 1027 / KCTC 2358 / NCIMB 9240 / NCTC 8049).